The primary structure comprises 513 residues: MKQLHVQRYLEKVRSRKQHFLYPLLFKEYIYAFAHDYGLNGSIFYEPAEIIGNDNKSSSVLVKRLIIRMYQQNYLINSINHSNQNRFIGHNNYFYSHFFSLMISESFAVIMEIPFSLRLVSSPEEKEIPQFQNLRSIHSIFPFLEDKLSHLNYVSDILIPHPIHFEILVQILQCRIQDVPSLHLLRFFLHEYHNWNSLITSKKSIYVFSKENKRLFRLLYNFYVFECEFVFVFLRKQSSYLRLTSFGTFLERIHFYGKIEHLLVVYRNYFNKTLWFFTDPFMHYVRYQGKAILASKGTHLFMKKWKCYLVNFWQYYFHFWSQPHRIHINQLSNYSFHFLGYLSSVLRNLLVVRNQMLENSYLIDTVTKKFDTIVPVIPLIGSLSKAKFCTLLGHPISKPIWTDLSDCDIIDRFGRICRNLSHYYSGSSKKRSLYRIKYILRFSCARTLARKHKSTVRTFLQRLGSVLLEEFFTEEEQVLSLIFPKTTPFSLHGSHRERIWYLDIIRINDLVNH.

This sequence belongs to the intron maturase 2 family. MatK subfamily.

It is found in the plastid. Its subcellular location is the chloroplast. In terms of biological role, usually encoded in the trnK tRNA gene intron. Probably assists in splicing its own and other chloroplast group II introns. The protein is Maturase K of Typha angustifolia (Narrow leaf cattail).